We begin with the raw amino-acid sequence, 210 residues long: MTNLNYQQTHFVMSAPDIRHLPSDCGIEVAFAGRSNAGKSSALNTLTNQKSLARTSKTPGRTQLINLFEVVEGKRLVDLPGYGYAEVPEEMKRKWQRALGEYLEKRQSLQGLVVLMDIRHPLKDLDQQMIQWAVESNIQVLVLLTKADKLASGARKAQLNMVREAVLAFNGDVQVEAFSSLKKQGVDKLRQKLDSWFSELAPVEEIQDGE.

In terms of domain architecture, EngB-type G spans 25 to 199 (CGIEVAFAGR…RQKLDSWFSE (175 aa)). GTP-binding positions include 33–40 (GRSNAGKS), 60–64 (GRTQL), 78–81 (DLPG), 145–148 (TKAD), and 178–180 (FSS). Residues S40 and T62 each contribute to the Mg(2+) site.

It belongs to the TRAFAC class TrmE-Era-EngA-EngB-Septin-like GTPase superfamily. EngB GTPase family. Mg(2+) is required as a cofactor.

Necessary for normal cell division and for the maintenance of normal septation. The chain is Probable GTP-binding protein EngB from Salmonella dublin (strain CT_02021853).